Reading from the N-terminus, the 174-residue chain is Adenylosuccinate synthetase (174 aa).

GTP-binding positions include 13–19 (GDEGKGK) and 41–43 (GHT). D14 serves as the catalytic Proton acceptor. Mg(2+) contacts are provided by D14 and G41. IMP is bound by residues 14–17 (DEGK), 39–42 (NAGH), T130, and R144. The Proton donor role is filled by H42.

The protein belongs to the adenylosuccinate synthetase family. In terms of assembly, homodimer. The cofactor is Mg(2+).

The protein resides in the cytoplasm. The catalysed reaction is IMP + L-aspartate + GTP = N(6)-(1,2-dicarboxyethyl)-AMP + GDP + phosphate + 2 H(+). The protein operates within purine metabolism; AMP biosynthesis via de novo pathway; AMP from IMP: step 1/2. In terms of biological role, plays an important role in the de novo pathway of purine nucleotide biosynthesis. Catalyzes the first committed step in the biosynthesis of AMP from IMP. The chain is Adenylosuccinate synthetase from Stutzerimonas stutzeri (Pseudomonas stutzeri).